The sequence spans 205 residues: Transcription antitermination protein NusB (205 aa).

The protein belongs to the NusB family.

Its function is as follows. Involved in transcription antitermination. Required for transcription of ribosomal RNA (rRNA) genes. Binds specifically to the boxA antiterminator sequence of the ribosomal RNA (rrn) operons. The chain is Transcription antitermination protein NusB from Acaryochloris marina (strain MBIC 11017).